We begin with the raw amino-acid sequence, 391 residues long: Succinate--CoA ligase [ADP-forming] subunit beta (391 aa).

The ATP-grasp domain occupies 9–246 (KHLFADYDIP…ITQEDEAEVQ (238 aa)). Residues Lys-46, 53 to 55 (GRG), Glu-99, Leu-102, and Glu-107 each bind ATP. Residues Asn-199 and Asp-213 each contribute to the Mg(2+) site. Substrate-binding positions include Asn-266 and 323 to 325 (GIV).

This sequence belongs to the succinate/malate CoA ligase beta subunit family. Heterotetramer of two alpha and two beta subunits. Requires Mg(2+) as cofactor.

It carries out the reaction succinate + ATP + CoA = succinyl-CoA + ADP + phosphate. The enzyme catalyses GTP + succinate + CoA = succinyl-CoA + GDP + phosphate. Its pathway is carbohydrate metabolism; tricarboxylic acid cycle; succinate from succinyl-CoA (ligase route): step 1/1. In terms of biological role, succinyl-CoA synthetase functions in the citric acid cycle (TCA), coupling the hydrolysis of succinyl-CoA to the synthesis of either ATP or GTP and thus represents the only step of substrate-level phosphorylation in the TCA. The beta subunit provides nucleotide specificity of the enzyme and binds the substrate succinate, while the binding sites for coenzyme A and phosphate are found in the alpha subunit. This chain is Succinate--CoA ligase [ADP-forming] subunit beta, found in Alkalilimnicola ehrlichii (strain ATCC BAA-1101 / DSM 17681 / MLHE-1).